The following is a 500-amino-acid chain: Hexose transporter 1 (500 aa).

Residues 1 to 25 (MKNSNEISSSQSLKNNGSDGFFNTS) lie on the Cytoplasmic side of the membrane. The chain crosses the membrane as a helical span at residues 26 to 46 (LMYVLAACLASFLFGYQVSVL). The Extracellular segment spans residues 47-75 (NTIKDFIVIEFGWCAGKEVNCDDSTLKSS). A disulfide bridge links Cys-60 with Cys-67. Residues 76–96 (FLLASVFIGAVVGSGFSGFLV) form a helical membrane-spanning segment. Over 97–101 (QHGRR) the chain is Cytoplasmic. A helical membrane pass occupies residues 102–122 (FSLLVIYNFFILVSILTSITH). The Extracellular portion of the chain corresponds to 123 to 131 (HFHTILFSR). Residues 132-152 (LLSGFGIGLITVSVPMYISEM) form a helical membrane-spanning segment. Over 153 to 166 (THKDKKGAYGVLHQ) the chain is Cytoplasmic. Gln-166 contributes to the alpha-D-glucose binding site. Gln-166 contacts beta-D-glucose. The chain crosses the membrane as a helical span at residues 167 to 187 (LFITFGIFIAVLLGMAMGNVP). Residues 188–203 (EEVNNPLGTFQQIWWR) are Extracellular-facing. Residues 204 to 224 (LMFFFPCIISILGIVLLTFFF) form a helical membrane-spanning segment. Topologically, residues 225 to 289 (KEETPYYLFE…RAMKIPSYRY (65 aa)) are cytoplasmic. The helical transmembrane segment at 290–310 (VILLGCILSGLQQFTGINVLV) threads the bilayer. Positions 301, 302, and 307 each coordinate alpha-D-glucose. A beta-D-glucose-binding site is contributed by Gln-301. Residue Asn-307 participates in beta-D-glucose binding. At 311-327 (SNSNALYKGFLTNEWIT) the chain is on the extracellular side. The helical transmembrane segment at 328-348 (TLSVIMTVVNFLMTFPAIYIV) threads the bilayer. Asn-337 is a beta-D-glucose binding site. Residues 349–356 (EKLGRKTL) are Cytoplasmic-facing. Residues 357-377 (LLCGCAGIVCAFLPTAIANLI) form a helical membrane-spanning segment. The Extracellular portion of the chain corresponds to 378 to 390 (NNTSDVVKKLSIS). Residues 391–411 (ATFVMIVSFAVSYGPVLWIYL) traverse the membrane as a helical segment. Trp-408 contacts alpha-D-glucose. Residues 412–425 (HEMFPSEIKDSAAS) are Cytoplasmic-facing. Residues 426 to 446 (LASLVNWMCAIIVVFPSDIII) form a helical membrane-spanning segment. The Extracellular segment spans residues 447 to 451 (KQSPT). The helical transmembrane segment at 452 to 472 (ILFFIFSGMSIVAFLFIFFFI) threads the bilayer. The Cytoplasmic segment spans residues 473 to 500 (KETKGGEIGTSPYITLEERQKHMGKSVV).

Belongs to the major facilitator superfamily. Sugar transporter (TC 2.A.1.1) family. Homodimer.

Its subcellular location is the cell membrane. It carries out the reaction D-glucose(out) = D-glucose(in). It catalyses the reaction D-fructose(out) = D-fructose(in). The catalysed reaction is D-galactose(in) = D-galactose(out). The enzyme catalyses D-mannose(out) = D-mannose(in). It carries out the reaction D-glucosamine(out) = D-glucosamine(in). It catalyses the reaction D-xylose(out) = D-xylose(in). Its activity is regulated as follows. Inhibited by cytochalasin B. Functionally, sodium-independent facilitative hexose transporter. Can transport D-glucose and D-fructose. Can transport D-mannose, D-galactose, D-xylose and D-glucosamine. The polypeptide is Hexose transporter 1 (Plasmodium knowlesi).